The following is a 420-amino-acid chain: Histidine--tRNA ligase (420 aa).

The protein belongs to the class-II aminoacyl-tRNA synthetase family. In terms of assembly, homodimer.

Its subcellular location is the cytoplasm. It carries out the reaction tRNA(His) + L-histidine + ATP = L-histidyl-tRNA(His) + AMP + diphosphate + H(+). The protein is Histidine--tRNA ligase of Thermotoga sp. (strain RQ2).